The chain runs to 122 residues: MIQQESRLKIADNTGAREILCIRVLGGSTRRFAGIGDVIVATVKEAAPGGNVKSGEIVKAVIVRTKKETRRADGSYISFDENAAVIIKNDNEPRGTRIFGPVARELREKKFMKIVSLAPEVI.

The protein belongs to the universal ribosomal protein uL14 family. In terms of assembly, part of the 50S ribosomal subunit. Forms a cluster with proteins L3 and L19. In the 70S ribosome, L14 and L19 interact and together make contacts with the 16S rRNA in bridges B5 and B8.

Functionally, binds to 23S rRNA. Forms part of two intersubunit bridges in the 70S ribosome. The protein is Large ribosomal subunit protein uL14 of Corynebacterium efficiens (strain DSM 44549 / YS-314 / AJ 12310 / JCM 11189 / NBRC 100395).